The chain runs to 396 residues: uncharacterized protein (396 aa).

12 helical membrane-spanning segments follow: residues 12-32 (LLALAVSAFAIGTTEFISVGL), 48-68 (GLTVSLYALGVTFGAPILTSL), 78-98 (LLWIMFIFIAGNTMAATASSI), 106-126 (VISAFSHGVFMSIGSTIAADI), 138-158 (IMFTGLTVATVTGVPFGTFIG), 165-185 (FAFMVIIAVGIIAFITNGILV), 209-229 (LLLLFVITALGYGGTFVVFTY), 242-262 (AGTVAVILLGYGIAIAIGNMI), 271-291 (PIAALFYMFIVQAIVLFVLTF), 297-317 (AAGLITILCMGLLAFMNVPGL), 338-358 (AMNIAAFNAGIALGSYLGGVI), and 362-382 (IGLIHTAWIGGLMVVGAVILT).

This sequence belongs to the major facilitator superfamily.

It is found in the cell membrane. This is an uncharacterized protein from Bacillus subtilis (strain 168).